Reading from the N-terminus, the 165-residue chain is MDAPRRDMELLSNSLAAYAHIRANPESFGLYFVLGVCFGLLLTLCLLVISISWAPRPRPRGPAQRRDPRSSTLEPEDDDEDEEDTVTRLGPDDTLPGPELSAEPDGPLNVNVFTSAEELERAQRLEERERILREIWRTGQPDLLGTGTLGPSPTATGTLGRMHYY.

The helical transmembrane segment at 29–49 threads the bilayer; it reads GLYFVLGVCFGLLLTLCLLVI. Disordered stretches follow at residues 57–109 and 143–165; these read PRPR…GPLN and LLGT…MHYY. Acidic residues predominate over residues 74–84; it reads EPEDDDEDEED. Phosphothreonine is present on residues Thr85, Thr148, and Thr158.

It belongs to the EVA1 family.

The protein resides in the membrane. The polypeptide is Protein eva-1 homolog B (EVA1B) (Homo sapiens (Human)).